Here is a 100-residue protein sequence, read N- to C-terminus: uncharacterized protein (100 aa).

This is an uncharacterized protein from Caulobacter vibrioides (strain ATCC 19089 / CIP 103742 / CB 15) (Caulobacter crescentus).